The primary structure comprises 270 residues: LIM zinc-binding domain-containing Nebulette (270 aa).

Residues 3 to 63 (PQCARCGKVV…NAHYPKQSFT (61 aa)) enclose the LIM zinc-binding domain. Residues 61 to 95 (SFTTVADTPENLRLKQQSELQSQVKYKRDFEESKG) form a Nebulin 1 repeat. The residue at position 96 (Arg96) is an Omega-N-methylarginine. One copy of the Nebulin 2 repeat lies at 97-131 (GFSIVTDTPELQRLKRTQEQISNVKYHEDFEKTKG). Arg132 is modified (omega-N-methylarginine). Residues 133 to 159 (GFTPVVDDPVTERVRKSTQVVSDAAYK) form a Nebulin 3 repeat. Residue Thr135 is modified to Phosphothreonine. In terms of domain architecture, SH3 spans 210 to 270 (AHLRTYRAMY…LPANYIEFVN (61 aa)). Ser230 bears the Phosphoserine mark.

The protein localises to the cytoplasm. In terms of biological role, binds to actin and plays an important role in the assembly of the Z-disk. Isoform 2 might play a role in the assembly of focal adhesion. The chain is LIM zinc-binding domain-containing Nebulette (Nebl) from Mus musculus (Mouse).